The sequence spans 1072 residues: DNA-directed RNA polymerase subunit beta (1072 aa).

It belongs to the RNA polymerase beta chain family. In plastids the minimal PEP RNA polymerase catalytic core is composed of four subunits: alpha, beta, beta', and beta''. When a (nuclear-encoded) sigma factor is associated with the core the holoenzyme is formed, which can initiate transcription.

Its subcellular location is the plastid. It is found in the chloroplast. It catalyses the reaction RNA(n) + a ribonucleoside 5'-triphosphate = RNA(n+1) + diphosphate. Functionally, DNA-dependent RNA polymerase catalyzes the transcription of DNA into RNA using the four ribonucleoside triphosphates as substrates. The sequence is that of DNA-directed RNA polymerase subunit beta from Lepidium virginicum (Virginia pepperweed).